Here is a 254-residue protein sequence, read N- to C-terminus: Aspartate/glutamate leucyltransferase (254 aa).

The protein belongs to the R-transferase family. Bpt subfamily.

The protein resides in the cytoplasm. The enzyme catalyses N-terminal L-glutamyl-[protein] + L-leucyl-tRNA(Leu) = N-terminal L-leucyl-L-glutamyl-[protein] + tRNA(Leu) + H(+). It carries out the reaction N-terminal L-aspartyl-[protein] + L-leucyl-tRNA(Leu) = N-terminal L-leucyl-L-aspartyl-[protein] + tRNA(Leu) + H(+). Its function is as follows. Functions in the N-end rule pathway of protein degradation where it conjugates Leu from its aminoacyl-tRNA to the N-termini of proteins containing an N-terminal aspartate or glutamate. This chain is Aspartate/glutamate leucyltransferase, found in Xylella fastidiosa (strain M12).